The chain runs to 444 residues: Acyl-CoA (8-3)-desaturase (444 aa).

N-acetylmethionine is present on Met-1. The Cytoplasmic portion of the chain corresponds to 1-121 (MAPDPVAAET…FRELRATVER (121 aa)). One can recognise a Cytochrome b5 heme-binding domain in the interval 17-94 (PRYFTWDEVA…MNSLLIGELS (78 aa)). A helical transmembrane segment spans residues 122–142 (MGLMKANHVFFLLYLLHILLL). The Lumenal segment spans residues 143–145 (DGA). Residues 146-170 (AWLTLWVFGTSFLPFLLCAVLLSAV) traverse the membrane as a helical segment. Residues 171 to 267 (QAQAGWLQHD…PYNHQHKYFF (97 aa)) lie on the Cytoplasmic side of the membrane. The short motif at 179–183 (HDFGH) is the Histidine box-1 element. Residues 216–220 (HFQHH) carry the Histidine box-2 motif. A helical membrane pass occupies residues 268–288 (LIGPPALLPLYFQWYIFYFVI). Residues 289-305 (QRKKWVDLAWMITFYVR) are Lumenal-facing. Residues 306–326 (FFLTYVPLLGLKAFLGLFFIV) form a helical membrane-spanning segment. The Cytoplasmic portion of the chain corresponds to 327–444 (RFLESNWFVW…QLWLDAYLHQ (118 aa)). The short motif at 382–386 (QIEHH) is the Histidine box-3 element.

It belongs to the fatty acid desaturase type 1 family. In terms of tissue distribution, widely expressed, with highest levels in liver, brain, adrenal gland and heart. Highly expressed in fetal liver and brain.

The protein localises to the endoplasmic reticulum membrane. The protein resides in the mitochondrion. It catalyses the reaction (8Z,11Z,14Z)-eicosatrienoyl-CoA + 2 Fe(II)-[cytochrome b5] + O2 + 2 H(+) = (5Z,8Z,11Z,14Z)-eicosatetraenoyl-CoA + 2 Fe(III)-[cytochrome b5] + 2 H2O. It carries out the reaction (8Z,11Z,14Z,17Z)-eicosatetraenoyl-CoA + 2 Fe(II)-[cytochrome b5] + O2 + 2 H(+) = (5Z,8Z,11Z,14Z,17Z)-eicosapentaenoyl-CoA + 2 Fe(III)-[cytochrome b5] + 2 H2O. The catalysed reaction is (11E)-octadecenoyl-CoA + 2 Fe(II)-[cytochrome b5] + O2 + 2 H(+) = (5Z,11E)-octadecadienoyl-CoA + 2 Fe(III)-[cytochrome b5] + 2 H2O. Its pathway is lipid metabolism; polyunsaturated fatty acid biosynthesis. In terms of biological role, acts as a front-end fatty acyl-coenzyme A (CoA) desaturase that introduces a cis double bond at carbon 5 located between a preexisting double bond and the carboxyl end of the fatty acyl chain. Involved in biosynthesis of highly unsaturated fatty acids (HUFA) from the essential polyunsaturated fatty acids (PUFA) linoleic acid (LA) (18:2n-6) and alpha-linolenic acid (ALA) (18:3n-3) precursors. Specifically, desaturates dihomo-gamma-linoleoate (DGLA) (20:3n-6) and eicosatetraenoate (ETA) (20:4n-3) to generate arachidonate (AA) (20:4n-6) and eicosapentaenoate (EPA) (20:5n-3), respectively. As a rate limiting enzyme for DGLA (20:3n-6) and AA (20:4n-6)-derived eicosanoid biosynthesis, controls the metabolism of inflammatory lipids like prostaglandin E2, critical for efficient acute inflammatory response and maintenance of epithelium homeostasis. Contributes to membrane phospholipid biosynthesis by providing AA (20:4n-6) as a major acyl chain esterified into phospholipids. In particular, regulates phosphatidylinositol-4,5-bisphosphate levels, modulating inflammatory cytokine production in T-cells. Also desaturates (11E)-octadecenoate (trans-vaccenoate)(18:1n-9), a metabolite in the biohydrogenation pathway of LA (18:2n-6). Does not exhibit any catalytic activity toward 20:3n-6, but it may enhance FADS2 activity. This Homo sapiens (Human) protein is Acyl-CoA (8-3)-desaturase.